The sequence spans 430 residues: MFTAYQDARSWIHGRLKFGVKPGLGRMKQLMARLGHPEKKIRAFHVAGTNGKGSTVAFIRSMLQEAGYTVGTFTSPYIITFNERISVNGIPISDEEWTALVNQMKPHVEALDQTEYGQPTEFEIMTACAFLYFAEFHKVDFVIFETGLGGRFDSTNVVEPLLTVITSIGHDHMNILGNTIEEIAGEKAGIIKEGIPIVTAVTQPEALQVIRHEAERHAAPFQSLHDACVIFNEEALPAGEQFSFKTEEKCYEDIRTSLIGTHQRQNAALSILAAEWLNKENIAHISDEALRSGLVKAAWPGRLELVQEHPPVYLDGAHNEEGVEKLAETMKQRFANSRISVVFSALKDKPYQNMIKRLETIAHAIHFASFDFPRASLAKDLYDASEISNKSWSEDPDDVIKFIESKKGSNEIVLITGSLYFISDIRKRLK.

51–54 (GKGS) is a binding site for ATP. A Mg(2+)-binding site is contributed by S75. 114–117 (TEYG) lines the 7,8-dihydropteroate pocket. Residue E145 participates in Mg(2+) binding. 7,8-dihydropteroate is bound at residue 152 to 154 (FDS). Position 172 (H172) interacts with Mg(2+). Q263, R302, and D315 together coordinate ATP.

It belongs to the folylpolyglutamate synthase family. In terms of assembly, monomer. Requires Mg(2+) as cofactor.

It carries out the reaction 7,8-dihydropteroate + L-glutamate + ATP = 7,8-dihydrofolate + ADP + phosphate + H(+). The enzyme catalyses (6S)-5,6,7,8-tetrahydrofolyl-(gamma-L-Glu)(n) + L-glutamate + ATP = (6S)-5,6,7,8-tetrahydrofolyl-(gamma-L-Glu)(n+1) + ADP + phosphate + H(+). Its pathway is cofactor biosynthesis; tetrahydrofolate biosynthesis; 7,8-dihydrofolate from 2-amino-4-hydroxy-6-hydroxymethyl-7,8-dihydropteridine diphosphate and 4-aminobenzoate: step 2/2. The protein operates within cofactor biosynthesis; tetrahydrofolylpolyglutamate biosynthesis. In terms of biological role, functions in two distinct reactions of the de novo folate biosynthetic pathway. Catalyzes the addition of a glutamate residue to dihydropteroate (7,8-dihydropteroate or H2Pte) to form dihydrofolate (7,8-dihydrofolate monoglutamate or H2Pte-Glu). Also catalyzes successive additions of L-glutamate to tetrahydrofolate, leading to folylpolyglutamate derivatives. The polypeptide is Dihydrofolate synthase/folylpolyglutamate synthase (folC) (Bacillus subtilis (strain 168)).